We begin with the raw amino-acid sequence, 211 residues long: Neuroendocrine protein 7B2 (211 aa).

An N-terminal signal peptide occupies residues 1–26 (MVSRMVSTMLSGLLFWLASGWTPAFA). Residues 106 to 132 (DFSEDQGYPDPPNPCPVGKTDDGCLEN) form a disordered region. A disulfide bridge links Cys-120 with Cys-129. Phosphoserine is present on residues Ser-140 and Ser-204. The interval 173–211 (GGERRKRRSVNPYLQGQRLDNVVAKKSVPHFSDEDKDPE) is disordered.

It belongs to the 7B2 family. Interacts with PCSK2/PC2 early in the secretory pathway. Dissociation occurs at later stages. In terms of processing, proteolytically cleaved in the Golgi by a furin-like convertase to generate bioactive peptides. Sulfated on tyrosine residues.

Its subcellular location is the secreted. In terms of biological role, acts as a molecular chaperone for PCSK2/PC2, preventing its premature activation in the regulated secretory pathway. Binds to inactive PCSK2 in the endoplasmic reticulum and facilitates its transport from there to later compartments of the secretory pathway where it is proteolytically matured and activated. Also required for cleavage of PCSK2 but does not appear to be involved in its folding. Plays a role in regulating pituitary hormone secretion. The C-terminal peptide inhibits PCSK2 in vitro. The polypeptide is Neuroendocrine protein 7B2 (SCG5) (Pan troglodytes (Chimpanzee)).